A 159-amino-acid polypeptide reads, in one-letter code: MAKSKNHTTHNQSRKWHRNGIKKPRSQRYESLKGVDPKFLRNMRFAKKHNKKGLKKMQANNAKAMSARAEAIKALVKPKEVKPKIPKGVSRKLDRLAYIAHPKLGKRARARIAKGLRLCRPKAKAKAKAKDQTKAQAAAPASVPAQAPKRTQAPTKASE.

Residues 1-26 are compositionally biased toward basic residues; the sequence is MAKSKNHTTHNQSRKWHRNGIKKPRS. Positions 1–32 are disordered; it reads MAKSKNHTTHNQSRKWHRNGIKKPRSQRYESL. The residue at position 5 (lysine 5) is an N6-methyllysine. Serine 31 is subject to Phosphoserine. Lysine 33 carries the N6-acetyllysine modification. The segment covering 117–127 has biased composition (basic residues); that stretch reads RLCRPKAKAKA. The tract at residues 117–159 is disordered; the sequence is RLCRPKAKAKAKAKDQTKAQAAAPASVPAQAPKRTQAPTKASE. Positions 134 to 149 are enriched in low complexity; it reads KAQAAAPASVPAQAPK. Position 142 is a phosphoserine (serine 142).

It belongs to the eukaryotic ribosomal protein eL29 family. As to quaternary structure, component of the large ribosomal subunit.

It localises to the cytoplasm. Its function is as follows. Component of the large ribosomal subunit. The ribosome is a large ribonucleoprotein complex responsible for the synthesis of proteins in the cell. This Homo sapiens (Human) protein is Large ribosomal subunit protein eL29 (RPL29).